A 212-amino-acid chain; its full sequence is Ropporin-1A (212 aa).

The RIIa domain occupies 12–49 (PELPKMLKEFAKAAIRVQPQDLIQWAADYFEALSRGET). Position 56 is a phosphoserine (serine 56). Residues 209 to 212 (VQLE) are interaction with RHPN1.

This sequence belongs to the ropporin family. In terms of assembly, homodimer. Interacts with AKAP3 and RHPN1. May interact with SPA17. Interacts with FSCB; the interaction increases upon spermatozoa capacitation conditions. Interacts with CFAP61. Post-translationally, sumoylated, sumoylation decreases upon spermatozoa capacitation conditions. Testis specific in adult. Overexpressed in hematologic tumor cells.

Its subcellular location is the cell projection. It localises to the cilium. The protein resides in the flagellum. Functionally, important for male fertility. With ROPN1L, involved in fibrous sheath integrity and sperm motility, plays a role in PKA-dependent signaling processes required for spermatozoa capacitation. The protein is Ropporin-1A (ROPN1) of Homo sapiens (Human).